Here is a 431-residue protein sequence, read N- to C-terminus: Probable glucarate dehydratase (431 aa).

His-29, Thr-108, Tyr-153, and Lys-198 together coordinate substrate. Lys-200 functions as the Proton acceptor in the catalytic mechanism. Residues Asp-228 and Asn-276 each contribute to the Mg(2+) site. Residues 228–230, Asn-276, 327–329, His-356, and Arg-410 each bind substrate; these read DPN and HSN. His-327 acts as the Proton acceptor in catalysis.

It belongs to the mandelate racemase/muconate lactonizing enzyme family. GlucD subfamily. It depends on Mg(2+) as a cofactor.

It carries out the reaction D-glucarate = 5-dehydro-4-deoxy-D-glucarate + H2O. It participates in carbohydrate acid metabolism; D-glucarate degradation; 2,5-dioxopentanoate from D-glucarate: step 1/2. In terms of biological role, catalyzes the dehydration of glucarate to 5-keto-4-deoxy-D-glucarate (5-kdGluc). The chain is Probable glucarate dehydratase (gudD) from Streptomyces coelicolor (strain ATCC BAA-471 / A3(2) / M145).